A 429-amino-acid polypeptide reads, in one-letter code: GTPase Obg (429 aa).

The 158-residue stretch at 1–158 folds into the Obg domain; sequence MFVDQVKIYV…RNVQLELKVL (158 aa). The interval 124 to 145 is disordered; that stretch reads RGNKRFATPANPAPELSENGEP. Positions 159–329 constitute an OBG-type G domain; that stretch reads ADVGLVGFPS…LLLAIADKLE (171 aa). GTP is bound by residues 165-172, 190-194, 212-215, 282-285, and 310-312; these read GFPSVGKS, FTTIV, DLPG, NKMD, and SAV. Mg(2+) contacts are provided by S172 and T192. The OCT domain maps to 351-429; it reads KYVADEPDFE…LLDYEFEFMD (79 aa).

The protein belongs to the TRAFAC class OBG-HflX-like GTPase superfamily. OBG GTPase family. As to quaternary structure, monomer. The cofactor is Mg(2+).

The protein localises to the cytoplasm. An essential GTPase which binds GTP, GDP and possibly (p)ppGpp with moderate affinity, with high nucleotide exchange rates and a fairly low GTP hydrolysis rate. Plays a role in control of the cell cycle, stress response, ribosome biogenesis and in those bacteria that undergo differentiation, in morphogenesis control. The chain is GTPase Obg from Listeria monocytogenes serotype 4a (strain HCC23).